The chain runs to 270 residues: Putative phosphatase YxeH (270 aa).

Residue D8 is the Nucleophile of the active site. D8 contributes to the Mg(2+) binding site. Residue M9 participates in phosphate binding. A Mg(2+)-binding site is contributed by D10. Phosphate-binding positions include 42–43 (TG) and K196. D219 contributes to the Mg(2+) binding site. N222 provides a ligand contact to phosphate.

The protein belongs to the HAD-like hydrolase superfamily. Cof family. Mg(2+) is required as a cofactor.

The chain is Putative phosphatase YxeH (yxeH) from Bacillus subtilis (strain 168).